A 341-amino-acid polypeptide reads, in one-letter code: L-threonine 3-dehydrogenase (341 aa).

Residue Cys-38 participates in Zn(2+) binding. Active-site charge relay system residues include Thr-40 and His-43. Residues His-63, Glu-64, Cys-93, Cys-96, Cys-99, and Cys-107 each contribute to the Zn(2+) site. NAD(+) contacts are provided by residues Ile-175, Asp-195, Arg-200, 262–264 (LGI), and 286–287 (IY).

It belongs to the zinc-containing alcohol dehydrogenase family. In terms of assembly, homotetramer. It depends on Zn(2+) as a cofactor.

It is found in the cytoplasm. It catalyses the reaction L-threonine + NAD(+) = (2S)-2-amino-3-oxobutanoate + NADH + H(+). The protein operates within amino-acid degradation; L-threonine degradation via oxydo-reductase pathway; glycine from L-threonine: step 1/2. In terms of biological role, catalyzes the NAD(+)-dependent oxidation of L-threonine to 2-amino-3-ketobutyrate. The sequence is that of L-threonine 3-dehydrogenase from Shewanella sediminis (strain HAW-EB3).